A 56-amino-acid polypeptide reads, in one-letter code: Large ribosomal subunit protein bL32 (56 aa).

The disordered stretch occupies residues 1-34 (MAVQQNKPSRSKRGMRRAHDALKTSTISVDKTSG).

It belongs to the bacterial ribosomal protein bL32 family.

The protein is Large ribosomal subunit protein bL32 of Baumannia cicadellinicola subsp. Homalodisca coagulata.